The sequence spans 301 residues: Probable alpha-L-glutamate ligase (301 aa).

The 184-residue stretch at 104-287 folds into the ATP-grasp domain; the sequence is LQLLSRKGIG…VAGMIYEFIE (184 aa). Residues lysine 141, 178-179, aspartate 187, and 211-213 each bind ATP; these read EF and RSN. Mg(2+) contacts are provided by aspartate 248, glutamate 260, and asparagine 262. Aspartate 248, glutamate 260, and asparagine 262 together coordinate Mn(2+).

Belongs to the RimK family. The cofactor is Mg(2+). Requires Mn(2+) as cofactor.

In Vibrio vulnificus (strain CMCP6), this protein is Probable alpha-L-glutamate ligase.